The following is a 443-amino-acid chain: Tol-Pal system protein TolB (443 aa).

Residues 1 to 33 form the signal peptide; it reads MKIGIINTKIRTVFSAFACMIAASLVCTMPARA.

It belongs to the TolB family. As to quaternary structure, the Tol-Pal system is composed of five core proteins: the inner membrane proteins TolA, TolQ and TolR, the periplasmic protein TolB and the outer membrane protein Pal. They form a network linking the inner and outer membranes and the peptidoglycan layer.

The protein localises to the periplasm. Part of the Tol-Pal system, which plays a role in outer membrane invagination during cell division and is important for maintaining outer membrane integrity. The sequence is that of Tol-Pal system protein TolB from Brucella suis (strain ATCC 23445 / NCTC 10510).